The sequence spans 217 residues: tRNA (guanine-N(7)-)-methyltransferase (217 aa).

The S-adenosyl-L-methionine site is built by glutamate 44, glutamate 69, aspartate 96, and aspartate 118. Residue aspartate 118 is part of the active site. Substrate-binding positions include lysine 122, aspartate 154, and 191-194 (TEYE).

Belongs to the class I-like SAM-binding methyltransferase superfamily. TrmB family.

It carries out the reaction guanosine(46) in tRNA + S-adenosyl-L-methionine = N(7)-methylguanosine(46) in tRNA + S-adenosyl-L-homocysteine. The protein operates within tRNA modification; N(7)-methylguanine-tRNA biosynthesis. Catalyzes the formation of N(7)-methylguanine at position 46 (m7G46) in tRNA. The sequence is that of tRNA (guanine-N(7)-)-methyltransferase from Bacillus mycoides (strain KBAB4) (Bacillus weihenstephanensis).